The chain runs to 436 residues: Carboxypeptidase A5 (436 aa).

A signal peptide spans 1 to 33 (MQGTPGGGTRPGPSPVDRRTLLVFSFILAAALG). The propeptide at 34–126 (QMNFTGDQVL…ERQAMAKSRR (93 aa)) is activation peptide. The Peptidase M14 domain maps to 138–431 (SYHTLEEIYS…MALRTIMEHT (294 aa)). Zn(2+) is bound by residues His196 and Glu199. Residues 196-199 (HSRE), Arg254, and 271-272 (NR) each bind substrate. A disulfide bridge links Cys265 with Cys288. His323 contacts Zn(2+). Substrate is bound by residues 324–325 (SY) and Tyr375. Catalysis depends on Glu397, which acts as the Proton donor/acceptor.

The protein belongs to the peptidase M14 family. It depends on Zn(2+) as a cofactor. Expression is very low or not detectable.

The protein resides in the secreted. This Homo sapiens (Human) protein is Carboxypeptidase A5 (CPA5).